The following is a 201-amino-acid chain: 3-isopropylmalate dehydratase small subunit (201 aa).

It belongs to the LeuD family. LeuD type 1 subfamily. In terms of assembly, heterodimer of LeuC and LeuD.

It carries out the reaction (2R,3S)-3-isopropylmalate = (2S)-2-isopropylmalate. It functions in the pathway amino-acid biosynthesis; L-leucine biosynthesis; L-leucine from 3-methyl-2-oxobutanoate: step 2/4. Functionally, catalyzes the isomerization between 2-isopropylmalate and 3-isopropylmalate, via the formation of 2-isopropylmaleate. This Shewanella oneidensis (strain ATCC 700550 / JCM 31522 / CIP 106686 / LMG 19005 / NCIMB 14063 / MR-1) protein is 3-isopropylmalate dehydratase small subunit.